Here is a 508-residue protein sequence, read N- to C-terminus: Ribonuclease Y (508 aa).

A helical transmembrane segment spans residues 1–21 (MMLWYIVAGAGGLLIGYLIAN). The KH domain occupies 198–283 (TVSTVSLPSD…EMYEKAKQEV (86 aa)). One can recognise an HD domain in the interval 324–417 (VLNHSIEVAL…VAAADALSAA (94 aa)).

This sequence belongs to the RNase Y family.

Its subcellular location is the cell membrane. In terms of biological role, endoribonuclease that initiates mRNA decay. The chain is Ribonuclease Y from Thermotoga maritima (strain ATCC 43589 / DSM 3109 / JCM 10099 / NBRC 100826 / MSB8).